Here is a 1367-residue protein sequence, read N- to C-terminus: Probable serine/threonine-protein kinase pkgA (1367 aa).

Disordered stretches follow at residues 140–164 (IDEN…NKTI), 264–429 (KNGK…LLSR), 456–556 (PTPL…SRKP), and 771–792 (PREE…SDPV). Positions 143 to 162 (NNNNNNNNNNNNNNNNNKNK) are enriched in low complexity. The span at 271-282 (IKRPSPPLPPPQ) shows a compositional bias: pro residues. The span at 287–326 (EQQKEQKEQQKEQQKEQQKEQQKEQEQKQQEPQKYVKFEI) shows a compositional bias: basic and acidic residues. Positions 340-381 (ISSSNISNEISKQQQQQQQQQQQQQQQQQQQQQQQQQQQQQQ) are enriched in low complexity. Residues 399 to 421 (ANNNILTTPLSSQPTQSLETPST) show a composition bias toward polar residues. A compositionally biased stretch (acidic residues) spans 506–517 (GEDEEEDEDDDN). Residues 531–544 (LKNKRPFKKTHVHH) are compositionally biased toward basic residues. Positions 810 to 1236 (FEFIKPITKG…AEEIKSHPFF (427 aa)) constitute a Protein kinase domain. ATP is bound by residues 816-824 (ITKGGYGKV) and K839. The active-site Proton acceptor is the D933. Disordered stretches follow at residues 971–1034 (FSPT…PSNT), 1084–1134 (FIPP…HNIH), and 1288–1312 (QNQN…TATA). Low complexity predominate over residues 979-1015 (NNQSSSSSSVSNIGGSNTIGSNISSTNNNNNNNNTTG). A compositionally biased stretch (polar residues) spans 1025 to 1034 (NTETPIPSNT). 2 stretches are compositionally biased toward low complexity: residues 1092 to 1125 (QQPI…QQTT) and 1294 to 1312 (SSTI…TATA). In terms of domain architecture, AGC-kinase C-terminal spans 1237–1347 (KSINWKTILT…VNFQSLLELN (111 aa)).

The protein belongs to the protein kinase superfamily. AGC Ser/Thr protein kinase family.

It catalyses the reaction L-seryl-[protein] + ATP = O-phospho-L-seryl-[protein] + ADP + H(+). The enzyme catalyses L-threonyl-[protein] + ATP = O-phospho-L-threonyl-[protein] + ADP + H(+). This is Probable serine/threonine-protein kinase pkgA (pkgA) from Dictyostelium discoideum (Social amoeba).